A 160-amino-acid chain; its full sequence is 6,7-dimethyl-8-ribityllumazine synthase (160 aa).

Residues Trp27, 59-61 (AIE), and 81-83 (VVI) each bind 5-amino-6-(D-ribitylamino)uracil. 86-87 (QT) is a (2S)-2-hydroxy-3-oxobutyl phosphate binding site. His89 serves as the catalytic Proton donor. Asn114 contacts 5-amino-6-(D-ribitylamino)uracil. Arg128 serves as a coordination point for (2S)-2-hydroxy-3-oxobutyl phosphate.

The protein belongs to the DMRL synthase family. As to quaternary structure, homopentamer.

The enzyme catalyses (2S)-2-hydroxy-3-oxobutyl phosphate + 5-amino-6-(D-ribitylamino)uracil = 6,7-dimethyl-8-(1-D-ribityl)lumazine + phosphate + 2 H2O + H(+). It participates in cofactor biosynthesis; riboflavin biosynthesis; riboflavin from 2-hydroxy-3-oxobutyl phosphate and 5-amino-6-(D-ribitylamino)uracil: step 1/2. In terms of biological role, catalyzes the formation of 6,7-dimethyl-8-ribityllumazine by condensation of 5-amino-6-(D-ribitylamino)uracil with 3,4-dihydroxy-2-butanone 4-phosphate. This is the penultimate step in the biosynthesis of riboflavin. In Mycolicibacterium paratuberculosis (strain ATCC BAA-968 / K-10) (Mycobacterium paratuberculosis), this protein is 6,7-dimethyl-8-ribityllumazine synthase.